A 183-amino-acid chain; its full sequence is Translation initiation factor IF-3 (183 aa).

The protein belongs to the IF-3 family. In terms of assembly, monomer.

It localises to the cytoplasm. In terms of biological role, IF-3 binds to the 30S ribosomal subunit and shifts the equilibrium between 70S ribosomes and their 50S and 30S subunits in favor of the free subunits, thus enhancing the availability of 30S subunits on which protein synthesis initiation begins. In Pseudomonas putida (strain W619), this protein is Translation initiation factor IF-3.